Reading from the N-terminus, the 453-residue chain is uncharacterized protein (453 aa).

To B.subtilis YcdB.

This is an uncharacterized protein from Bacillus subtilis (strain 168).